Consider the following 806-residue polypeptide: Volume-regulated anion channel subunit LRRC8E (806 aa).

Topologically, residues 1-22 (MIPVAEFKQFTEQQPAFKVLKP) are cytoplasmic. The chain crosses the membrane as a helical span at residues 23–43 (WWDVLAEYITYAMLMIGVFGC). At 44–130 (TLQVTQDKII…YETALHWYAK (87 aa)) the chain is on the extracellular side. Cys-54 and Cys-311 form a disulfide bridge. 2 N-linked (GlcNAc...) asparagine glycosylation sites follow: Asn-57 and Asn-80. A disordered region spans residues 75–104 (QSSASNDSDLETTVPPPTATSSPPREMSGL). The chain crosses the membrane as a helical span at residues 131–151 (YFPYLVVIHTLIFIICGNFWF). Over 152 to 275 (KFPGTSSKIE…MRQTVLKVCK (124 aa)) the chain is Cytoplasmic. The interval 182–217 (EVSGESSQEKPNQERSIDRELSKPNFEEGSPATADL) is disordered. Residues 188–207 (SQEKPNQERSIDRELSKPNF) are compositionally biased toward basic and acidic residues. Residues 276-296 (FVLITIYNAVLVGKIHFIVPC) traverse the membrane as a helical segment. The Extracellular portion of the chain corresponds to 297–323 (SVHTEDMTGYNSFCCNHTKAHLFSKLA). A glycan (N-linked (GlcNAc...) asparagine) is linked at Asn-312. Residues 324-344 (ISYLCFLGVYGLTCFYTLYWL) form a helical membrane-spanning segment. Over 345 to 806 (FRRPLKEYSF…VDVRDKFKED (462 aa)) the chain is Cytoplasmic. LRR repeat units lie at residues 569–589 (HLQK…NALK), 593–614 (LVKE…VFSL), 616–637 (NLQV…ISLQ), 641–662 (KLSV…IRKL), 664–685 (GLEE…LFLC), 687–708 (KLRH…IGVL), 710–731 (LLQY…LFFC), 733–754 (KLKT…VGSL), and 756–777 (CLVK…IGNC).

Belongs to the LRRC8 family. Heterohexamer; oligomerizes with other LRRC8 proteins (lrrc8a, lrrc8c, lrrc8d and/or lrrc8b) to form a heterohexamer. Detected in a channel complex that contains lrrc8a, lrrc8c and lrrc8e. In vivo, the subunit composition may depend primarily on expression levels, and heterooligomeric channels containing various proportions of the different LRRC8 proteins may coexist.

It is found in the cell membrane. The protein localises to the endoplasmic reticulum membrane. Its subcellular location is the lysosome membrane. It catalyses the reaction chloride(in) = chloride(out). It carries out the reaction iodide(out) = iodide(in). The enzyme catalyses taurine(out) = taurine(in). The catalysed reaction is 2',3'-cGAMP(out) = 2',3'-cGAMP(in). Functionally, non-essential component of the volume-regulated anion channel (VRAC, also named VSOAC channel), an anion channel required to maintain a constant cell volume in response to extracellular or intracellular osmotic changes. The VRAC channel conducts iodide better than chloride and can also conduct organic osmolytes like taurine. Mediates efflux of amino acids, such as aspartate, in response to osmotic stress. The VRAC channel also mediates transport of immunoreactive cyclic dinucleotide GMP-AMP (2'-3'-cGAMP), an immune messenger produced in response to DNA virus in the cytosol. Channel activity requires lrrc8a plus at least one other family member (lrrc8b, lrrc8c, lrrc8d or lrrc8e); channel characteristics depend on the precise subunit composition. Also plays a role in lysosome homeostasis by forming functional lysosomal VRAC channels in response to low cytoplasmic ionic strength condition: lysosomal VRAC channels are necessary for the formation of large lysosome-derived vacuoles, which store and then expel excess water to maintain cytosolic water homeostasis. This chain is Volume-regulated anion channel subunit LRRC8E, found in Xenopus laevis (African clawed frog).